The chain runs to 447 residues: MAGSEAVEDKEIKSAVSSCEAYFEKVQSRKNLPKSLQETLNSAFAGIPVSSFPQVPGGRVIEIQAETPVSEAVKILSDSKILSAPVINTDHESSLDWRERYLGIIDYSSIILWVLESAELAAIALSATSATAAGVGAGAVGALGVAALGMTGPVAAAGLAAAAVGAAVAGGVAAERGIGKDAPTAADKLGKDFYEVILQEEPFKSTTVRTILKSFRWAPFLPVSTESSMLSVMLLLSKYRLRNVPVIKTGEPDIKNYVTQSAVVHGLEGCKGRDWFDHISALPISDLGLPFMSPNEVISIESEELILEAFKRMRDNNIGGLPVVEGLNKKIVGNISMRDIRYLLLQPEVFSNFRQLTVKSFATKIATAGEEYGLAIPAITCRPDSTLGSVINSLASRSVHRVYVAAGDENELYGVITLRDVISCFVSEPPNYFENCLGFSVKEMLNR.

Position 2 is an N-acetylalanine (alanine 2). The residue at position 35 (serine 35) is a Phosphoserine. 4 consecutive CBS domains span residues 54 to 120, 214 to 275, 292 to 350, and 374 to 433; these read QVPG…SAEL, SFRW…GRDW, MSPN…PEVF, and LAIP…PNYF.

It belongs to the 5'-AMP-activated protein kinase gamma subunit family. Subunit of a probable heterotrimeric complex consisting of an alpha catalytic (KIN10 or KIN11) subunit, and a beta (KINB) and a gamma (KING or SNF4) non-catalytic regulatory subunits.

Functionally, regulatory subunit of the probable trimeric SNF1-related protein kinase (SnRK) complex, which may play a role in a signal transduction cascade regulating gene expression and carbohydrate metabolism in higher plants. This Arabidopsis thaliana (Mouse-ear cress) protein is SNF1-related protein kinase regulatory subunit gamma-1-like (CBSCBS2).